Reading from the N-terminus, the 233-residue chain is Probable GTP-binding protein EngB (233 aa).

In terms of domain architecture, EngB-type G spans 31–205 (TGVEIAFAGR…RRKLDTWFGP (175 aa)). GTP contacts are provided by residues 39–46 (GRSNAGKS), 66–70 (GRTQL), 84–87 (DLPG), 151–154 (TKAD), and 184–186 (FSS). Residues Ser-46 and Thr-68 each coordinate Mg(2+).

This sequence belongs to the TRAFAC class TrmE-Era-EngA-EngB-Septin-like GTPase superfamily. EngB GTPase family. Mg(2+) serves as cofactor.

Necessary for normal cell division and for the maintenance of normal septation. The polypeptide is Probable GTP-binding protein EngB (Photobacterium profundum (strain SS9)).